The primary structure comprises 268 residues: Thiazole synthase (268 aa).

Lys-96 serves as the catalytic Schiff-base intermediate with DXP. Residues Gly-157, 185 to 186, and 207 to 208 contribute to the 1-deoxy-D-xylulose 5-phosphate site; these read AG and NT. Residues 238-268 form a disordered region; sequence PMRPREAASPSSPVEGVPFTPTGPRPGRGPQ. The segment covering 258 to 268 has biased composition (pro residues); it reads PTGPRPGRGPQ.

This sequence belongs to the ThiG family. In terms of assembly, homotetramer. Forms heterodimers with either ThiH or ThiS.

Its subcellular location is the cytoplasm. The catalysed reaction is [ThiS sulfur-carrier protein]-C-terminal-Gly-aminoethanethioate + 2-iminoacetate + 1-deoxy-D-xylulose 5-phosphate = [ThiS sulfur-carrier protein]-C-terminal Gly-Gly + 2-[(2R,5Z)-2-carboxy-4-methylthiazol-5(2H)-ylidene]ethyl phosphate + 2 H2O + H(+). Its pathway is cofactor biosynthesis; thiamine diphosphate biosynthesis. Functionally, catalyzes the rearrangement of 1-deoxy-D-xylulose 5-phosphate (DXP) to produce the thiazole phosphate moiety of thiamine. Sulfur is provided by the thiocarboxylate moiety of the carrier protein ThiS. In vitro, sulfur can be provided by H(2)S. The protein is Thiazole synthase of Thermus thermophilus (strain ATCC BAA-163 / DSM 7039 / HB27).